The following is a 202-amino-acid chain: Probable nicotinate-nucleotide adenylyltransferase (202 aa).

The protein belongs to the NadD family.

It catalyses the reaction nicotinate beta-D-ribonucleotide + ATP + H(+) = deamido-NAD(+) + diphosphate. Its pathway is cofactor biosynthesis; NAD(+) biosynthesis; deamido-NAD(+) from nicotinate D-ribonucleotide: step 1/1. Functionally, catalyzes the reversible adenylation of nicotinate mononucleotide (NaMN) to nicotinic acid adenine dinucleotide (NaAD). The chain is Probable nicotinate-nucleotide adenylyltransferase from Clostridium perfringens (strain 13 / Type A).